A 334-amino-acid polypeptide reads, in one-letter code: GTP 3',8-cyclase (334 aa).

One can recognise a Radical SAM core domain in the interval 13 to 239 (KFHRKFYYLR…KVRSHHDGPA (227 aa)). Arg-22 serves as a coordination point for GTP. 2 residues coordinate [4Fe-4S] cluster: Cys-29 and Cys-33. Tyr-35 contacts S-adenosyl-L-methionine. Position 36 (Cys-36) interacts with [4Fe-4S] cluster. Residue Arg-73 coordinates GTP. Gly-77 contacts S-adenosyl-L-methionine. Thr-104 contributes to the GTP binding site. Ser-128 is an S-adenosyl-L-methionine binding site. Lys-165 contacts GTP. Met-199 serves as a coordination point for S-adenosyl-L-methionine. [4Fe-4S] cluster contacts are provided by Cys-262 and Cys-265. GTP is bound at residue 267–269 (RLR). Cys-279 is a [4Fe-4S] cluster binding site.

It belongs to the radical SAM superfamily. MoaA family. In terms of assembly, monomer and homodimer. [4Fe-4S] cluster is required as a cofactor.

It carries out the reaction GTP + AH2 + S-adenosyl-L-methionine = (8S)-3',8-cyclo-7,8-dihydroguanosine 5'-triphosphate + 5'-deoxyadenosine + L-methionine + A + H(+). Its pathway is cofactor biosynthesis; molybdopterin biosynthesis. Its function is as follows. Catalyzes the cyclization of GTP to (8S)-3',8-cyclo-7,8-dihydroguanosine 5'-triphosphate. This Vibrio parahaemolyticus serotype O3:K6 (strain RIMD 2210633) protein is GTP 3',8-cyclase.